Consider the following 182-residue polypeptide: UPF0316 protein BCB4264_A3368 (182 aa).

3 helical membrane passes run 6–26 (LIFV…ILLV), 32–52 (SAAG…GIVF), and 58–78 (WMNI…GGYI).

It belongs to the UPF0316 family.

The protein resides in the cell membrane. The chain is UPF0316 protein BCB4264_A3368 from Bacillus cereus (strain B4264).